Consider the following 215-residue polypeptide: MGCYSMGFVGRKAGMSRVFLEDGCSIPVTLIEATANRVVQIKTSDVDGYDAVQVTVGSRRSVLVNKPESGHFAKAKVEAGRGLWEFRVEKTQLGSYSVGSEVGLSIFAVGQKVDIQGITKGKGFQGTIKRHNFRMGDATHGNSLSHRAPGSLGQRQTPGRVFPGKKMSGHMGAVRQSVQNLEVVKIDVERCLIAVRGAIPGASGGDVLIRSASKI.

An N5-methylglutamine modification is found at Q156.

The protein belongs to the universal ribosomal protein uL3 family. As to quaternary structure, part of the 50S ribosomal subunit. Forms a cluster with proteins L14 and L19. In terms of processing, methylated by PrmB.

Functionally, one of the primary rRNA binding proteins, it binds directly near the 3'-end of the 23S rRNA, where it nucleates assembly of the 50S subunit. In Xylella fastidiosa (strain 9a5c), this protein is Large ribosomal subunit protein uL3.